The chain runs to 333 residues: Uroporphyrinogen decarboxylase (333 aa).

Residues 22–26, Asp-71, Tyr-145, Ser-200, and His-310 contribute to the substrate site; that span reads RQAGR.

This sequence belongs to the uroporphyrinogen decarboxylase family. In terms of assembly, homodimer.

The protein localises to the cytoplasm. The enzyme catalyses uroporphyrinogen III + 4 H(+) = coproporphyrinogen III + 4 CO2. It functions in the pathway porphyrin-containing compound metabolism; protoporphyrin-IX biosynthesis; coproporphyrinogen-III from 5-aminolevulinate: step 4/4. Its function is as follows. Catalyzes the decarboxylation of four acetate groups of uroporphyrinogen-III to yield coproporphyrinogen-III. The protein is Uroporphyrinogen decarboxylase of Thermoplasma acidophilum (strain ATCC 25905 / DSM 1728 / JCM 9062 / NBRC 15155 / AMRC-C165).